A 403-amino-acid chain; its full sequence is Mitochondrial intermembrane space import and assembly protein 40 (403 aa).

The N-terminal 31 residues, 1–31 (MLRNLVVRNACRNRPSIQVARGLCRHQTRRL), are a transit peptide targeting the mitochondrion. At 33-46 (ASSPQFGRNSNQEK) the chain is on the mitochondrial matrix side. Residues 47-66 (TAGFIMGILSMAGALYFIAP) form a helical; Signal-anchor for type II membrane protein membrane-spanning segment. Residues 67–403 (NRKPLFASRK…KEPLNEESKP (337 aa)) are Mitochondrial intermembrane-facing. Basic and acidic residues-rich tracts occupy residues 75–84 (RKVESDKTAE), 101–118 (NNSKSDENGDDNDSKNDE), 147–168 (EDNKSSEDKDTDESKVSTKDDE), 206–230 (SEKKDPEHSDDEKSQQGQSDDKTTT), and 262–271 (EELRKQEEKQ). Positions 75-292 (RKVESDKTAE…GAYNPDTGEI (218 aa)) are disordered. Disulfide bonds link C296–C298, C307–C340, and C317–C330. The 45-residue stretch at 304–348 (HGPCGEEFKSAFSCFVYSEAEPKGIDCVEKFQHMQDCFRKYPEHY) folds into the CHCH domain. 2 consecutive short sequence motifs (cx9C motif) follow at residues 307–317 (CGEEFKSAFSC) and 330–340 (CVEKFQHMQDC). Positions 351-403 (QLKETSDDEEPQDKVKVNTIESAPNVSSAKENAAKKAEQSDVKKEPLNEESKP) are disordered. A compositionally biased stretch (polar residues) spans 369–378 (TIESAPNVSS). Residues 382–403 (NAAKKAEQSDVKKEPLNEESKP) show a composition bias toward basic and acidic residues.

As to quaternary structure, monomer. Interacts with the FAD-linked sulfhydryl oxidase ERV1 and with the substrate proteins COX17, TIM9, and TIM13, forming transient intermolecular disulfide bridges. Interacts with FCJ1. Cu(2+) is required as a cofactor. Requires Zn(2+) as cofactor.

The protein resides in the mitochondrion inner membrane. Functionally, required for the import and folding of small cysteine-containing proteins (small Tim) in the mitochondrial intermembrane space (IMS). Forms a redox cycle with ERV1 that involves a disulfide relay system. Precursor proteins to be imported into the IMS are translocated in their reduced form into the mitochondria. The oxidized form of MIA40 forms a transient intermolecular disulfide bridge with the reduced precursor protein, resulting in oxidation of the precursor protein that now contains an intramolecular disulfide bond and is able to undergo folding in the IMS. Reduced MIA40 is reoxidized by FAD-linked sulfhydryl oxidase ERV1. The chain is Mitochondrial intermembrane space import and assembly protein 40 (MIA40) from Saccharomyces cerevisiae (strain ATCC 204508 / S288c) (Baker's yeast).